The following is a 199-amino-acid chain: Dephospho-CoA kinase (199 aa).

A DPCK domain is found at 3–199 (VLGLTGSIGM…AAAKMPRRRD (197 aa)). 11–16 (GMGKST) contributes to the ATP binding site.

It belongs to the CoaE family.

It localises to the cytoplasm. The enzyme catalyses 3'-dephospho-CoA + ATP = ADP + CoA + H(+). It functions in the pathway cofactor biosynthesis; coenzyme A biosynthesis; CoA from (R)-pantothenate: step 5/5. In terms of biological role, catalyzes the phosphorylation of the 3'-hydroxyl group of dephosphocoenzyme A to form coenzyme A. In Rhodopseudomonas palustris (strain ATCC BAA-98 / CGA009), this protein is Dephospho-CoA kinase.